We begin with the raw amino-acid sequence, 412 residues long: rRNA methyltransferase 1, mitochondrial (412 aa).

The transit peptide at 1-20 (MTSLTNAVFKRYLAVTPSAH) directs the protein to the mitochondrion.

It belongs to the class IV-like SAM-binding methyltransferase superfamily. RNA methyltransferase TrmH family.

It localises to the mitochondrion. The catalysed reaction is guanosine(2270) in 21S rRNA + S-adenosyl-L-methionine = 2'-O-methylguanosine(2270) in 21S rRNA + S-adenosyl-L-homocysteine + H(+). Its function is as follows. S-adenosyl-L-methionine-dependent 2'-O-ribose methyltransferase that catalyzes the formation of 2'-O-methylguanosine at position 2270 (Gm2270) in the 21S mitochondrial large subunit ribosomal RNA (mtLSU rRNA), a universally conserved modification in the peptidyl transferase domain of the mtLSU rRNA. This modification seems to be important for the normal accumulation of the mitochondrial large ribosomal subunit. The polypeptide is rRNA methyltransferase 1, mitochondrial (Saccharomyces cerevisiae (strain ATCC 204508 / S288c) (Baker's yeast)).